Reading from the N-terminus, the 417-residue chain is Snake venom metalloproteinase kistomin (417 aa).

Residues 1–20 form the signal peptide; the sequence is MIEVLLVTICLAAFPYQGSS. Residues 21–189 constitute a propeptide that is removed on maturation; it reads IILESGNVND…KKPFRLNLTP (169 aa). The Peptidase M12B domain occupies 197-391; that stretch reads AKVYLVIVAD…RKPECLFKKP (195 aa). Disulfide bonds link Cys-308–Cys-386, Cys-348–Cys-370, and Cys-350–Cys-353. His-333 serves as a coordination point for Zn(2+). Glu-334 is a catalytic residue. His-337 and His-343 together coordinate Zn(2+). Residues 392 to 417 constitute a propeptide that is removed on maturation; that stretch reads LRTDTVSTPVSGNEPLEVITMDDFYA.

This sequence belongs to the venom metalloproteinase (M12B) family. P-I subfamily. In terms of assembly, monomer. Requires Zn(2+) as cofactor. In terms of tissue distribution, expressed by the venom gland.

The protein localises to the secreted. Inhibited by EDTA, and O-phenanthrolene. Snake venom zinc metalloprotease that inhibits platelet aggregation by binding specifically to platelet glycoprotein VI (GP6) and platelet glycoprotein Ib alpha (GP1BA). It inhibits the interaction between collagen and platelet GP6 by cleaving GP6 (at '225-Glu-|-Ala-226' and '238-Val-|-Phe-239' bonds), and inhibits vWF-induced platelet aggregation by cleaving GP1BA and vWF. Cleavage of GP1BA occurs at two distinct sites to generate two soluble fragments. It also cleaves alpha- (FGA) and subsequently the gamma-chain (FGG) of fibrinogen, leaving the beta-chain unaffected. It also inhibits collagen-, convulxin- and ristocetin-induced platelet aggregation. It blocks the adhesion of platelet to immobilized collagen, but only exerts a slight inhibition to fibrinogen. In vivo, it exerts potent antithrombotic effect. This chain is Snake venom metalloproteinase kistomin, found in Calloselasma rhodostoma (Malayan pit viper).